We begin with the raw amino-acid sequence, 746 residues long: Histone-lysine N-methyltransferase EZH2 (746 aa).

Residues 1–340 (MGQTGKKSEK…AKEFAAALTA (340 aa)) form an interaction with DNMT1, DNMT3A and DNMT3B region. Serine 21 carries the phosphoserine; by PKB/AKT1 modification. An interaction with EED region spans residues 39–68 (KSMFSSNRQKILERTEILNQEWKQRRIQPV). Serine 75 is a glycosylation site (O-linked (GlcNAc) serine). Residue serine 76 is modified to Phosphoserine. Residues 180-222 (QYNDDDDDDDGDDPEEREEKQKDLEDHRDDKESRPPRKFPSDK) form a disordered region. Residues 182 to 195 (NDDDDDDDGDDPEE) show a composition bias toward acidic residues. Positions 196–222 (REEKQKDLEDHRDDKESRPPRKFPSDK) are enriched in basic and acidic residues. The interaction with CDYL stretch occupies residues 329-522 (EGAKEFAAAL…SSNHVYNYQP (194 aa)). The residue at position 339 (threonine 339) is a Phosphothreonine. The tract at residues 340–426 (AERIKTPPKR…PIKMKPNIEP (87 aa)) is disordered. The residue at position 345 (threonine 345) is a Phosphothreonine; by CDK1 and CDK2. Over residues 345 to 357 (TPPKRPGGRRRGR) the composition is skewed to basic residues. A phosphoserine mark is found at serine 363 and serine 366. Threonine 367 bears the Phosphothreonine mark. The span at 374–385 (ESKDTDSDREAG) shows a compositional bias: basic and acidic residues. Residue threonine 487 is modified to Phosphothreonine. In terms of domain architecture, CXC spans 503–605 (CRKIQLKKDG…SKNVSCKNCS (103 aa)). One can recognise an SET domain in the interval 612-727 (KHLLLAPSDV…TGEELFFDYR (116 aa)). A Glycyl lysine isopeptide (Lys-Gly) (interchain with G-Cter in SUMO2) cross-link involves residue lysine 634.

The protein belongs to the class V-like SAM-binding methyltransferase superfamily. Histone-lysine methyltransferase family. EZ subfamily. In terms of assembly, component of the PRC2/EED-EZH2 complex, which includes EED, EZH2, SUZ12, RBBP4 and RBBP7 and possibly AEBP2. The minimum components required for methyltransferase activity of the PRC2/EED-EZH2 complex are EED, EZH2 and SUZ12. The PRC2 complex may also interact with DNMT1, DNMT3A, DNMT3B and PHF1 via the EZH2 subunit and with SIRT1 via the SUZ12 subunit. Interacts with HDAC1 and HDAC2. Binds ATRX via the SET domain. Interacts with PRAME. Interacts with CDYL. Interacts with BMAL1, CLOCK and CRY1. Interacts with DNMT3L; the interaction is direct. Interacts with EZHIP; the interaction blocks EZH2 methyltransferase activity. Interacts with ZNF263; recruited to the SIX3 promoter along with other proteins involved in chromatin modification and transcriptional corepression where it contributes to transcriptional repression. Interacts with ARMC12. Interacts with ZMYND8; the interaction is dependent on the presence of chromatin. Interacts with DDX18; this interaction inhibits the PRC2 complex. Post-translationally, phosphorylated by AKT1. Phosphorylation by AKT1 reduces methyltransferase activity. Phosphorylation at Thr-345 by CDK1 and CDK2 promotes maintenance of H3K27me3 levels at EZH2-target loci, thus leading to epigenetic gene silencing. Sumoylated. In terms of processing, glycosylated: O-GlcNAcylation at Ser-75 by OGT increases stability of EZH2 and facilitates the formation of H3K27me3 by the PRC2/EED-EZH2 complex.

The protein localises to the nucleus. The catalysed reaction is L-lysyl(27)-[histone H3] + 3 S-adenosyl-L-methionine = N(6),N(6),N(6)-trimethyl-L-lysyl(27)-[histone H3] + 3 S-adenosyl-L-homocysteine + 3 H(+). Polycomb group (PcG) protein. Catalytic subunit of the PRC2/EED-EZH2 complex, which methylates 'Lys-9' (H3K9me) and 'Lys-27' (H3K27me) of histone H3, leading to transcriptional repression of the affected target gene. Able to mono-, di- and trimethylate 'Lys-27' of histone H3 to form H3K27me1, H3K27me2 and H3K27me3, respectively. Displays a preference for substrates with less methylation, loses activity when progressively more methyl groups are incorporated into H3K27, H3K27me0 &gt; H3K27me1 &gt; H3K27me2. Compared to EZH1-containing complexes, it is more abundant in embryonic stem cells and plays a major role in forming H3K27me3, which is required for embryonic stem cell identity and proper differentiation. The PRC2/EED-EZH2 complex may also serve as a recruiting platform for DNA methyltransferases, thereby linking two epigenetic repression systems. EZH2 can also methylate non-histone proteins such as the transcription factor GATA4 and the nuclear receptor RORA. Regulates the circadian clock via histone methylation at the promoter of the circadian genes. Essential for the CRY1/2-mediated repression of the CLOCK-BMAL1 transcriptional activation of PER1/2. Involved in the di and trimethylation of 'Lys-27' of histone H3 on PER1/2 promoters which is necessary for the CRY1/2 proteins to inhibit transcription. The chain is Histone-lysine N-methyltransferase EZH2 (EZH2) from Macaca fascicularis (Crab-eating macaque).